The chain runs to 259 residues: Methanethiol S-methyltransferase 2 (259 aa).

Helical transmembrane passes span 5 to 25, 46 to 66, 88 to 108, 115 to 135, and 182 to 202; these read LAIL…FLYA, LGEA…QHSV, TYVL…RPIP, SGIA…IAFA, and FLLA…FALA.

Belongs to the nurim family.

Its subcellular location is the membrane. The catalysed reaction is methanethiol + S-adenosyl-L-methionine = dimethyl sulfide + S-adenosyl-L-homocysteine + H(+). Functionally, catalyzes the methylation of methanethiol (MeSH) to yield dimethylsulphide (DMS). The chain is Methanethiol S-methyltransferase 2 from Bradyrhizobium diazoefficiens (strain JCM 10833 / BCRC 13528 / IAM 13628 / NBRC 14792 / USDA 110).